A 327-amino-acid chain; its full sequence is MVKSMRFRDLEVPTPGFGAMGISFALGNDLSYEEAEPVLLKALEQGCTFWDTAVSYGPGKNEKILGDFIRKYNCRDKLFIASKCGIAAFEDGSVTNSAEHIKTYIEGTIERLGFTPDLYYIHRMDPNTPLEESIPALDSLRKQGKTKYIGLSECSAETLRKANSIARIDAVQAEYSAFETIHETDGLIDTARELDIEFIAYGPLGHGWLVEDFPYQTPEDFAPEDYRRQIPKWQGENFYANKRIADGFRELAKRKKCTLPQVALAWVAAQGLISIPGTTKPERLVENFTSRDIELTEEEIKDMRKLVDVLKPQGDRYNEVAMRSIGK.

An NADP(+)-binding site is contributed by aspartate 51. Residue tyrosine 56 is the Proton donor of the active site. Substrate is bound at residue histidine 122. NADP(+) contacts are provided by residues 152–153, 202–212, and 286–294; these read SE, GPLGHGWLVED, and ENFTSRDIE.

It belongs to the aldo/keto reductase family. Aldo/keto reductase 2 subfamily.

In terms of biological role, aldo-keto reductase; part of the Fusarium detoxification of benzoxazolinone cluster 2 (FDB2) involved in the degradation of benzoxazolinones produced by the host plant. Maize, wheat, and rye produce the 2 benzoxazinone phytoanticipins 2,4-dihy-droxy-7-methoxy-1,4-benzoxazin-3-one (DIMBOA) and 2,4-dihydroxy-1,4-benzoxazin-3-one (DIBOA) that, due to their inherent instability once released, spontaneously degrade to the more stable corresponding benzoxazolinones, 6-methoxy-2-benzoxazolinone (MBOA) and 2-benzoxazolinone (BOA), respectively. The first step in the detoxification of benzoxazolinones involves the hydrolysis of the cyclic ester bond of benzoxazolinones by the FDB1 cluster gamma-lactamase MBL1 to aminophenols. MBL1 is able to convert BOA into 2-aminophenol (2-AP), as well as MBOA into 5-methoxy-2-aminophenol (2-AMP). The FDB2 cluster N-malonyltransferase FDB2/NAT1 then metabolizes aminophenols via N-malonylation to non-toxic malonamic acids. FDB2/NAT1 converts 2-AP into N-(2-hydroxyphenyl) malonamic acid (HPMA) and 2-AMP into N-(2-hydroxy-4-methoxyphenyl) malonamic acid (HMPMA). The duplicated dienlactone hydrolases DLH1 and DLH2 may provide redundant function for hydrolyzing the lactone moiety in the BOA molecule. The roles of the amidases an other enzymes encoded by the 2 FDB clusters have not been identified so far. This chain is Aldo-keto reductase FVEG_12638, found in Gibberella moniliformis (strain M3125 / FGSC 7600) (Maize ear and stalk rot fungus).